The primary structure comprises 413 residues: Multifunctional CCA protein (413 aa).

Residues Gly8 and Arg11 each contribute to the ATP site. CTP contacts are provided by Gly8 and Arg11. The Mg(2+) site is built by Asp21 and Asp23. Residues Arg91, Arg143, and Arg146 each coordinate ATP. CTP-binding residues include Arg91, Arg143, and Arg146. One can recognise an HD domain in the interval 232–333; the sequence is TGVHVMMVID…VRLLERADAL (102 aa).

The protein belongs to the tRNA nucleotidyltransferase/poly(A) polymerase family. Bacterial CCA-adding enzyme type 1 subfamily. In terms of assembly, monomer. Can also form homodimers and oligomers. The cofactor is Mg(2+). Ni(2+) is required as a cofactor.

It carries out the reaction a tRNA precursor + 2 CTP + ATP = a tRNA with a 3' CCA end + 3 diphosphate. The enzyme catalyses a tRNA with a 3' CCA end + 2 CTP + ATP = a tRNA with a 3' CCACCA end + 3 diphosphate. Its function is as follows. Catalyzes the addition and repair of the essential 3'-terminal CCA sequence in tRNAs without using a nucleic acid template. Adds these three nucleotides in the order of C, C, and A to the tRNA nucleotide-73, using CTP and ATP as substrates and producing inorganic pyrophosphate. tRNA 3'-terminal CCA addition is required both for tRNA processing and repair. Also involved in tRNA surveillance by mediating tandem CCA addition to generate a CCACCA at the 3' terminus of unstable tRNAs. While stable tRNAs receive only 3'-terminal CCA, unstable tRNAs are marked with CCACCA and rapidly degraded. This chain is Multifunctional CCA protein, found in Burkholderia pseudomallei (strain K96243).